A 1889-amino-acid polypeptide reads, in one-letter code: Protein TIC 214 (1889 aa).

Transmembrane regions (helical) follow at residues 11–31 (LISL…YYGF), 67–87 (FIAG…HLAL), 88–108 (GKPH…FFWN), 127–147 (LSIQ…HFIL), 175–195 (VGWL…LVWI), and 224–244 (IFSI…PSPI). Residues 255 to 265 (PEEVGESEEER) show a composition bias toward acidic residues. 2 disordered regions span residues 255–303 (PEEV…PSKE) and 1610–1633 (SNQE…KKKQ). Positions 279-293 (NQKQGTEENTSSSLF) are enriched in polar residues.

The protein belongs to the TIC214 family. In terms of assembly, part of the Tic complex.

It localises to the plastid. Its subcellular location is the chloroplast inner membrane. Involved in protein precursor import into chloroplasts. May be part of an intermediate translocation complex acting as a protein-conducting channel at the inner envelope. The sequence is that of Protein TIC 214 from Gossypium barbadense (Sea Island cotton).